The following is a 227-amino-acid chain: Orotidine 5'-phosphate decarboxylase (227 aa).

Substrate is bound by residues Asp-8, Lys-30, Asp-58 to Thr-67, Thr-117, Arg-177, Gln-186, Gly-206, and Arg-207. The active-site Proton donor is Lys-60.

The protein belongs to the OMP decarboxylase family. Type 1 subfamily. As to quaternary structure, homodimer.

The enzyme catalyses orotidine 5'-phosphate + H(+) = UMP + CO2. It participates in pyrimidine metabolism; UMP biosynthesis via de novo pathway; UMP from orotate: step 2/2. Its function is as follows. Catalyzes the decarboxylation of orotidine 5'-monophosphate (OMP) to uridine 5'-monophosphate (UMP). This is Orotidine 5'-phosphate decarboxylase from Campylobacter lari (strain RM2100 / D67 / ATCC BAA-1060).